A 710-amino-acid polypeptide reads, in one-letter code: Prolyl endopeptidase (710 aa).

At methionine 1 the chain carries N-acetylmethionine. The residue at position 157 (lysine 157) is an N6-acetyllysine. Residues serine 554, aspartate 641, and histidine 680 each act as charge relay system in the active site.

It belongs to the peptidase S9A family. The N-terminus is blocked. As to expression, ubiquitous.

The protein resides in the cytoplasm. It carries out the reaction Hydrolysis of Pro-|-Xaa &gt;&gt; Ala-|-Xaa in oligopeptides.. Its function is as follows. Cleaves peptide bonds on the C-terminal side of prolyl residues within peptides that are up to approximately 30 amino acids long. In Sus scrofa (Pig), this protein is Prolyl endopeptidase (PREP).